Consider the following 360-residue polypeptide: BLOC-1-related complex subunit 6 (360 aa).

The disordered stretch occupies residues methionine 1 to threonine 201. The span at alanine 23–proline 33 shows a compositional bias: polar residues. Threonine 41 carries the phosphothreonine modification. Serine 130 is modified (phosphoserine). Residues glutamate 144–alanine 155 are compositionally biased toward acidic residues. Serine 173 carries the phosphoserine modification. A compositionally biased stretch (gly residues) spans glycine 179–arginine 198. The residue at position 201 (threonine 201) is a Phosphothreonine. Residue serine 204 is modified to Phosphoserine.

This sequence belongs to the BORCS6 family. Component of the BLOC-one-related complex (BORC) which is composed of BLOC1S1, BLOC1S2, BORCS5, BORCS6, BORCS7, BORCS8, KXD1 and SNAPIN.

The protein localises to the lysosome membrane. As part of the BORC complex may play a role in lysosomes movement and localization at the cell periphery. Associated with the cytosolic face of lysosomes, the BORC complex may recruit ARL8B and couple lysosomes to microtubule plus-end-directed kinesin motor. In Mus musculus (Mouse), this protein is BLOC-1-related complex subunit 6.